Here is a 157-residue protein sequence, read N- to C-terminus: Large ribosomal subunit protein eL24 (157 aa).

Residues 95–157 form a disordered region; that stretch reads NQKPEVRKAQ…VSAPRVGGKR (63 aa). The span at 96-117 shows a compositional bias: basic and acidic residues; sequence QKPEVRKAQREQAIRAAKEAKK. Over residues 123–145 the composition is skewed to low complexity; the sequence is KKQTTQSSKAPAKSAQKQKIAKP.

The protein belongs to the eukaryotic ribosomal protein eL24 family. In terms of assembly, component of the large ribosomal subunit.

It is found in the cytoplasm. In terms of biological role, component of the large ribosomal subunit. The ribosome is a large ribonucleoprotein complex responsible for the synthesis of proteins in the cell. Plays an essential role in early embryonic development. This is Large ribosomal subunit protein eL24 (rpl24) from Danio rerio (Zebrafish).